We begin with the raw amino-acid sequence, 360 residues long: N6-Methyl-AMP deaminase (360 aa).

Zn(2+)-binding residues include H23 and H25. N(6)-methyl-AMP is bound by residues H25, N27, H73, 105-108 (STPR), D147, and G180. H207 serves as a coordination point for Zn(2+). 3 residues coordinate N(6)-methyl-AMP: E210, D292, and D293. The active-site Proton donor is the E210. Position 292 (D292) interacts with Zn(2+).

Belongs to the metallo-dependent hydrolases superfamily. Adenosine and AMP deaminases family. In terms of assembly, monomer. Zn(2+) serves as cofactor.

It catalyses the reaction N(6)-methyl-AMP + H2O + H(+) = IMP + methylamine. In terms of biological role, catalyzes the hydrolysis of the free cytosolic methylated adenosine nucleotide N(6)-methyl-AMP (N6-mAMP) to produce inositol monophosphate (IMP) and methylamine. Is required for the catabolism of cytosolic N6-mAMP, which is derived from the degradation of mRNA containing N6-methylated adenine (m6A). This chain is N6-Methyl-AMP deaminase (Mapda), found in Mus musculus (Mouse).